A 202-amino-acid polypeptide reads, in one-letter code: Putative pituitary tumor-transforming gene 3 protein (202 aa).

Positions 61–64 (RKAL) match the D-box motif. An SH3-binding motif is present at residues 163–173 (PPSPLKMPSPP).

Belongs to the securin family.

It is found in the cytoplasm. The protein localises to the nucleus. The sequence is that of Putative pituitary tumor-transforming gene 3 protein (PTTG3) from Pan troglodytes (Chimpanzee).